The following is a 211-amino-acid chain: MSYAYLFKYIIIGDTGVGKSCLLLQFTDKRFQPVHDLTIGVEFGARMITIDNKPIKLQIWDTAGQESFRSITRSYYRGAAGALLVYDITRRETFNHLASWLEDARQHANANMTIMLIGNKCDLAHRRAVSTEEGEQFAKEHGLIFMEASAKTAQNVEEAFIKTAATIYKKIQDGVFDVSNESYGIKVGYGGIPGPSGGRDGSTSQGGGCCG.

An N-acetylserine modification is found at Ser-2. 13 to 21 (GDTGVGKSC) serves as a coordination point for GTP. The short motif at 35–43 (HDLTIGVEF) is the Effector region element. GTP contacts are provided by residues 61-65 (DTAGQ), 119-122 (NKCD), and 149-151 (SAK). S-geranylgeranyl cysteine attachment occurs at residues Cys-209 and Cys-210.

The protein belongs to the small GTPase superfamily. Rab family.

The protein resides in the cell membrane. Its function is as follows. Intracellular vesicle trafficking and protein transport. The chain is Ras-related protein RABB1c (RABB1C) from Arabidopsis thaliana (Mouse-ear cress).